Here is a 108-residue protein sequence, read N- to C-terminus: Nitrogenase-stabilizing/protective protein NifW (108 aa).

The protein belongs to the NifW family. In terms of assembly, homotrimer; associates with NifD.

Functionally, may protect the nitrogenase Fe-Mo protein from oxidative damage. This Zymomonas mobilis subsp. mobilis (strain ATCC 31821 / ZM4 / CP4) protein is Nitrogenase-stabilizing/protective protein NifW.